The sequence spans 334 residues: Putative transport protein MTH_1211 (334 aa).

8 helical membrane passes run 24–44 (AIVVYPLWTMLFLGAVFAYIV), 60–80 (VSIILAMIVVIMPLVGILVFT), 84–104 (IINSAPSLLSLAGSIHVPGAG), 131–151 (YVVAILQSVPMISLQLFVFLS), 189–209 (VLLSIFYGHFLTALAIGLMAA), 220–240 (AILLGIMTGLFQLIPVIGPWA), 255–275 (ILRGVLVLIFGLFLSTIDIYL), and 289–309 (MIFLVGFLGGPVVWGVAGFIV).

The protein belongs to the autoinducer-2 exporter (AI-2E) (TC 2.A.86) family.

The protein localises to the cell membrane. In Methanothermobacter thermautotrophicus (strain ATCC 29096 / DSM 1053 / JCM 10044 / NBRC 100330 / Delta H) (Methanobacterium thermoautotrophicum), this protein is Putative transport protein MTH_1211.